The following is a 353-amino-acid chain: Photosystem II D2 protein (353 aa).

Residue T2 is modified to N-acetylthreonine. Residue T2 is modified to Phosphothreonine. Residues 41 to 61 (CAYFALGGWLTGTTFVTSWYT) traverse the membrane as a helical segment. H118 lines the chlorophyll a pocket. The chain crosses the membrane as a helical span at residues 125–141 (GFMLRQFELARSVQLRP). Residues Q130 and N143 each coordinate pheophytin a. A helical transmembrane segment spans residues 153 to 166 (VFVSVFLIYPLGQS). Position 198 (H198) interacts with chlorophyll a. Residues 208-228 (AALLCAIHGATVENTLFEDGD) traverse the membrane as a helical segment. Positions 215 and 262 each coordinate a plastoquinone. Residue H215 coordinates Fe cation. Position 269 (H269) interacts with Fe cation. The helical transmembrane segment at 279–295 (GLWMSAIGVVGLALNLR) threads the bilayer.

This sequence belongs to the reaction center PufL/M/PsbA/D family. In terms of assembly, PSII is composed of 1 copy each of membrane proteins PsbA, PsbB, PsbC, PsbD, PsbE, PsbF, PsbH, PsbI, PsbJ, PsbK, PsbL, PsbM, PsbT, PsbX, PsbY, PsbZ, Psb30/Ycf12, at least 3 peripheral proteins of the oxygen-evolving complex and a large number of cofactors. It forms dimeric complexes. It depends on The D1/D2 heterodimer binds P680, chlorophylls that are the primary electron donor of PSII, and subsequent electron acceptors. It shares a non-heme iron and each subunit binds pheophytin, quinone, additional chlorophylls, carotenoids and lipids. There is also a Cl(-1) ion associated with D1 and D2, which is required for oxygen evolution. The PSII complex binds additional chlorophylls, carotenoids and specific lipids. as a cofactor.

It localises to the plastid. It is found in the chloroplast thylakoid membrane. The enzyme catalyses 2 a plastoquinone + 4 hnu + 2 H2O = 2 a plastoquinol + O2. Photosystem II (PSII) is a light-driven water:plastoquinone oxidoreductase that uses light energy to abstract electrons from H(2)O, generating O(2) and a proton gradient subsequently used for ATP formation. It consists of a core antenna complex that captures photons, and an electron transfer chain that converts photonic excitation into a charge separation. The D1/D2 (PsbA/PsbD) reaction center heterodimer binds P680, the primary electron donor of PSII as well as several subsequent electron acceptors. D2 is needed for assembly of a stable PSII complex. The protein is Photosystem II D2 protein of Zygnema circumcarinatum (Green alga).